The sequence spans 576 residues: Homeobox protein invected (576 aa).

Disordered regions lie at residues 1–68 (MSTL…DEQT), 80–102 (EVEE…NSVL), 305–344 (GGSV…LAQS), 364–410 (NSND…GEDS), and 426–476 (SDRP…RPRT). Positions 80 to 91 (EVEEEHDLDLED) are enriched in acidic residues. 3 stretches are compositionally biased toward low complexity: residues 309–325 (SGSS…TNGN), 364–381 (NSND…TNTS), and 395–405 (AGAGATGASGK). The segment covering 450 to 468 (AGGGGGGVEKGEAADGGGV) has biased composition (gly residues). The segment at residues 471 to 530 (DKRPRTAFSGTQLARLKHEFNENRYLTEKRRQQLSGELGLNEAQIKIWFQNKRAKLKKSS) is a DNA-binding region (homeobox).

Belongs to the engrailed homeobox family. As to expression, expressed in row 6/7 of the embryonic neuroectoderm.

The protein resides in the nucleus. Functionally, engrailed (en) and invected (inv) are functionally redundant transcription factors in neuronal precursor cell NB5-3 specification. Inv is unable to substitute for en in other regulatory processes such as maintaining gsb expression in the neuroectoderm after stage 10 of embryogenesis. Maintenance of gsb expression in row 5 of the neuroectoderm involves an as yet unidentified short range signaling molecule. The chain is Homeobox protein invected (inv) from Drosophila melanogaster (Fruit fly).